Consider the following 527-residue polypeptide: Acid-sensing ion channel 1 (527 aa).

Over 1-49 (MMDLKVDEEEVDSGQPVSIQAFASSSTLHGISHIFSYERLSLKRVVWAL) the chain is Cytoplasmic. The chain crosses the membrane as a helical span at residues 50–71 (CFMGSLALLALVCTNRIQYYFL). Topologically, residues 72–424 (YPHVTKLDEV…NYETIEQKKA (353 aa)) are extracellular. Cystine bridges form between C94–C195, C173–C180, C291–C366, C309–C362, C313–C360, C322–C344, and C324–C336. 2 N-linked (GlcNAc...) asparagine glycosylation sites follow: N367 and N394. The chain crosses the membrane as a discontinuously helical span at residues 425 to 454 (YEVAGLLGDIGGQMGLFIGASILTVLELFD). Positions 443-445 (GAS) match the GAS motif; ion selectivity filter motif. Residues 455–527 (YAYEVIKHRL…ARGTFEDFTC (73 aa)) lie on the Cytoplasmic side of the membrane.

The protein belongs to the amiloride-sensitive sodium channel (TC 1.A.6) family. ASIC1 subfamily. Homotrimer. Heterotrimer; with other ASIC proteins producing channel with different properties.

It localises to the cell membrane. The protein localises to the postsynaptic cell membrane. It is found in the cell projection. The protein resides in the dendrite. The enzyme catalyses Na(+)(in) = Na(+)(out). It carries out the reaction Li(+)(in) = Li(+)(out). The catalysed reaction is K(+)(in) = K(+)(out). It catalyses the reaction Ca(2+)(in) = Ca(2+)(out). With respect to regulation, inhibited by the diuretic drug amiloride. Inhibited by Cs(1+) ions. Inhibited by the spider venom psalmotoxin-1; this locks the channel into its desensitized conformation. Channel activity is increased by the heterodimeric snake venom neurotoxin composed of MitTx-alpha and MitTx-beta; this slows channel closure and increases the magnitude of the steady-state current that is triggered by low pH. Forms voltage-independent, pH-gated trimeric sodium channels that act as postsynaptic excitatory receptors in the nervous system, playing a crucial role in regulating synaptic plasticity, learning, and memory. Upon extracellular pH drop this channel elicits transient, fast activating, and completely desensitizing inward currents. Displays high selectivity for sodium ions but can also permit the permeation of other cations. Regulates more or less directly intracellular calcium concentration and CaMKII phosphorylation, and thereby the density of dendritic spines. Modulates neuronal activity in the circuits underlying innate fear. This is Acid-sensing ion channel 1 from Gallus gallus (Chicken).